Consider the following 317-residue polypeptide: Spermidine synthase 2 (317 aa).

The 238-residue stretch at 27–264 (PGWFSEISPL…GMIGFMLCST (238 aa)) folds into the PABS domain. Glutamine 58 is an S-adenosyl 3-(methylsulfanyl)propylamine binding site. Tyrosine 88 serves as a coordination point for putrescine. Residues glutamine 89, aspartate 113, glutamate 133, 164-165 (DG), and aspartate 183 each bind S-adenosyl 3-(methylsulfanyl)propylamine. Aspartate 183 functions as the Proton acceptor in the catalytic mechanism. Putrescine contacts are provided by residues 183 to 186 (DSSD) and tyrosine 252.

This sequence belongs to the spermidine/spermine synthase family.

It carries out the reaction S-adenosyl 3-(methylsulfanyl)propylamine + putrescine = S-methyl-5'-thioadenosine + spermidine + H(+). It participates in amine and polyamine biosynthesis; spermidine biosynthesis; spermidine from putrescine: step 1/1. The chain is Spermidine synthase 2 from Datura stramonium (Jimsonweed).